The sequence spans 609 residues: ATP-dependent lipid A-core flippase (609 aa).

6 helical membrane passes run 47 to 67 (LLAA…IYLI), 88 to 108 (ILML…VGSF), 167 to 187 (AIIT…VMFV), 190 to 210 (WQLS…ISII), 279 to 299 (VIQI…AIFG), and 305 to 325 (GSSW…AAIL). Residues 47 to 340 (LLAAIGSIFF…LTKVNVVIQK (294 aa)) form the ABC transmembrane type-1 domain. The ABC transporter domain maps to 372–606 (VTIKDLSFAF…GGLYTRLYQS (235 aa)). Position 404-411 (404-411 (GKSGSGKT)) interacts with ATP.

It belongs to the ABC transporter superfamily. Lipid exporter (TC 3.A.1.106) family. Homodimer.

Its subcellular location is the cell inner membrane. It catalyses the reaction ATP + H2O + lipid A-core oligosaccharideSide 1 = ADP + phosphate + lipid A-core oligosaccharideSide 2.. In terms of biological role, involved in lipopolysaccharide (LPS) biosynthesis. Translocates lipid A-core from the inner to the outer leaflet of the inner membrane. Transmembrane domains (TMD) form a pore in the inner membrane and the ATP-binding domain (NBD) is responsible for energy generation. This is ATP-dependent lipid A-core flippase from Francisella tularensis subsp. holarctica (strain LVS).